A 1082-amino-acid polypeptide reads, in one-letter code: RhoGEF domain-containing protein gxcI (1082 aa).

A compositionally biased stretch (polar residues) spans 1–15; that stretch reads MRKNSTSNPSPSHQF. Disordered regions lie at residues 1 to 29, 59 to 78, 91 to 394, 438 to 488, and 504 to 524; these read MRKN…VNNN, DKNQ…VLPQ, YNEQ…VTSL, KQAS…SVSN, and INSF…SLSL. 5 stretches are compositionally biased toward low complexity: residues 20–29, 62–71, 96–109, 116–160, and 170–184; these read KNTTTVVNNN, QQQQQQQQQQ, PSSS…SSSP, LLST…SGSP, and PTIL…RQLP. Positions 185–206 are enriched in pro residues; it reads TRPPSPLPKLPSRPTSPVPPNP. Residues 211 to 244 are compositionally biased toward low complexity; it reads NTTTTNNNNNNNNNNNNNNNNNNNNNNNNNNNNN. The segment covering 262–276 has biased composition (pro residues); it reads PIPPPNDKPAPPPRP. A compositionally biased stretch (low complexity) spans 282–366; the sequence is TLTTPPTIAT…NNNNNSNNNK (85 aa). Over residues 367–379 the composition is skewed to pro residues; the sequence is PLPPTSTKPPRPK. Over residues 450 to 473 the composition is skewed to low complexity; it reads SSLSLSTTPTSVSPSTPSSANPTP. The region spanning 622-817 is the DH domain; the sequence is SFNKVIKEII…EKIVNDINGK (196 aa). A PH-like region spans residues 838-994; the sequence is QQLRDQTFLK…NDIDEAINIL (157 aa). Disordered regions lie at residues 920–961 and 1017–1060; these read NNNN…NSTP and NNNN…NSNN.

GTPase-activating protein. This is RhoGEF domain-containing protein gxcI (gxcI) from Dictyostelium discoideum (Social amoeba).